The primary structure comprises 495 residues: SYDSFGDRVTIIVFGASGDLARKKTFPALFGLFREKQLPSTVQIIGYARSHLSDKDFKDYISSHFKGGDDKTKEDFLNLCSYISDPYDTDEGYKKLEARCQEYESKHNVKVPERLFYLALPPSVFHTVCEQVKKNVYPKNEKSRIIIEKPFGRDLETYRELQKQISPLFTEDEVYRIDHYLGKEMVKNLLVLRFGNELFSGIWNNKHITSVQISFKEAFGTEGRGGYFDNIGIIRDVMQNHLLQVLTLLTMERPVSFDPEAVRDEKVKVLKAFDKIDVNDVLLGQYGKSEDGTKPGYLDDSTVKPNSKAVTYAAFRVNIHNERWDGVPIVLRAGKALDEGKAEIRIQFKPVAKGMFKEIQRNELVIRIQPNEAIYLKINSKIPGISTETSLTDLDLTYSTRYSKDFWIPEAYEALIRDCYLGNHSNFVRDDELEVSWKLFTPLLEAVEKEENVKLESYPYGSKGPKELRKYLIDHGYVFNDPGTYQWPLTNTDVK.

The residue at position 1 (serine 1) is an N-acetylserine. NADP(+)-binding positions include 15-22 (GASGDLAR), arginine 49, and lysine 149. Residues lysine 149, 179–183 (HYLGK), glutamate 217, and aspartate 236 each bind D-glucose 6-phosphate. Histidine 241 acts as the Proton acceptor in catalysis. Arginine 332 is a binding site for NADP(+). Lysine 335 lines the D-glucose 6-phosphate pocket. NADP(+) is bound by residues lysine 341, arginine 345, and arginine 367. Glutamine 369 provides a ligand contact to D-glucose 6-phosphate. Residues 375-377 (YLK), 395-397 (DLT), and lysine 463 contribute to the NADP(+) site.

This sequence belongs to the glucose-6-phosphate dehydrogenase family.

The enzyme catalyses D-glucose 6-phosphate + NADP(+) = 6-phospho-D-glucono-1,5-lactone + NADPH + H(+). It participates in carbohydrate degradation; pentose phosphate pathway; D-ribulose 5-phosphate from D-glucose 6-phosphate (oxidative stage): step 1/3. Its function is as follows. Catalyzes the rate-limiting step of the oxidative pentose-phosphate pathway, which represents a route for the dissimilation of carbohydrates besides glycolysis. The main function of this enzyme is to provide reducing power (NADPH) and pentose phosphates for fatty acid and nucleic acid synthesis. This chain is Glucose-6-phosphate 1-dehydrogenase, found in Cyberlindnera jadinii (Torula yeast).